A 122-amino-acid polypeptide reads, in one-letter code: Large ribosomal subunit protein bL12 (122 aa).

This sequence belongs to the bacterial ribosomal protein bL12 family. In terms of assembly, homodimer. Part of the ribosomal stalk of the 50S ribosomal subunit. Forms a multimeric L10(L12)X complex, where L10 forms an elongated spine to which 2 to 4 L12 dimers bind in a sequential fashion. Binds GTP-bound translation factors.

Its function is as follows. Forms part of the ribosomal stalk which helps the ribosome interact with GTP-bound translation factors. Is thus essential for accurate translation. This Mycoplasma genitalium (strain ATCC 33530 / DSM 19775 / NCTC 10195 / G37) (Mycoplasmoides genitalium) protein is Large ribosomal subunit protein bL12.